We begin with the raw amino-acid sequence, 547 residues long: MAAKEVKFGDSARKKMLVGVNVLADAVKATLGPKGRNVVLDKSFGAPTITKDGVSVAKEIELKDKFENMGAQLVKDVASKANDAAGDGTTTATVLAQAIVNEGLKAVAAGMNPMDLKRGIDKATVAIVAQLKELAKPCADTKAIAQVGTISANSDESIGQIIAEAMEKVGKEGVITVEEGSGLENELSVVEGMQFDRGYLSPYFVNKPDTMAAELDSPLLLLVDKKISNIREMLPVLEAVAKAGRPLLIVAEDVEGEALATLVVNNMRGIVKVAAVKAPGFGDRRKAMLQDIAILTGGTVISEEVGLSLEGATLEHLGNAKRVVINKENTTIIDGAGVQADIEARVLQIRKQIEETTSDYDREKLQERLAKLAGGVAVIKVGAATEVEMKEKKARVEDALHATRAAVEEGVVPGGGVALVRALQAIEGLKGDNEEQNVGIALLRRAVESPLRQIVANAGDEPSVVVDKVKQGSGNYGFNAATGVYGDMIEMGILDPAKVTRSALQAAASIGGLMITTEAMVAEIVEDKPAMGGMPDMGGMGGMGGMM.

ATP-binding positions include 30–33 (TLGP), Lys-51, 87–91 (DGTTT), Gly-415, 479–481 (NAA), and Asp-495.

This sequence belongs to the chaperonin (HSP60) family. In terms of assembly, forms a cylinder of 14 subunits composed of two heptameric rings stacked back-to-back. Interacts with the co-chaperonin GroES.

It is found in the cytoplasm. It catalyses the reaction ATP + H2O + a folded polypeptide = ADP + phosphate + an unfolded polypeptide.. Functionally, together with its co-chaperonin GroES, plays an essential role in assisting protein folding. The GroEL-GroES system forms a nano-cage that allows encapsulation of the non-native substrate proteins and provides a physical environment optimized to promote and accelerate protein folding. This Pseudomonas aeruginosa (strain UCBPP-PA14) protein is Chaperonin GroEL.